The following is a 435-amino-acid chain: Adenylosuccinate synthetase (435 aa).

GTP-binding positions include 11–17 (GDEGKGK) and 39–41 (GHT). D12 serves as the catalytic Proton acceptor. Residues D12 and G39 each coordinate Mg(2+). Residues 12–15 (DEGK), 37–40 (NAGH), T128, R142, Q223, T238, and R302 each bind IMP. The Proton donor role is filled by H40. 298–304 (SVTGRPR) is a binding site for substrate. Residues R304, 330 to 332 (KLD), and 412 to 414 (STG) contribute to the GTP site.

It belongs to the adenylosuccinate synthetase family. Homodimer. Requires Mg(2+) as cofactor.

The protein localises to the cytoplasm. The catalysed reaction is IMP + L-aspartate + GTP = N(6)-(1,2-dicarboxyethyl)-AMP + GDP + phosphate + 2 H(+). The protein operates within purine metabolism; AMP biosynthesis via de novo pathway; AMP from IMP: step 1/2. Its function is as follows. Plays an important role in the de novo pathway of purine nucleotide biosynthesis. Catalyzes the first committed step in the biosynthesis of AMP from IMP. This is Adenylosuccinate synthetase from Coxiella burnetii (strain RSA 331 / Henzerling II).